The sequence spans 364 residues: tRNA-specific 2-thiouridylase MnmA 1 (364 aa).

ATP-binding positions include glycine 10–serine 17 and methionine 36. Catalysis depends on cysteine 106, which acts as the Nucleophile. A disulfide bridge connects residues cysteine 106 and cysteine 204. Residue glycine 130 coordinates ATP. An interaction with tRNA region spans residues lysine 154–glutamine 156. Cysteine 204 functions as the Cysteine persulfide intermediate in the catalytic mechanism. The interval arginine 310–tyrosine 311 is interaction with tRNA.

Belongs to the MnmA/TRMU family.

The protein resides in the cytoplasm. The enzyme catalyses S-sulfanyl-L-cysteinyl-[protein] + uridine(34) in tRNA + AH2 + ATP = 2-thiouridine(34) in tRNA + L-cysteinyl-[protein] + A + AMP + diphosphate + H(+). Catalyzes the 2-thiolation of uridine at the wobble position (U34) of tRNA, leading to the formation of s(2)U34. The protein is tRNA-specific 2-thiouridylase MnmA 1 of Thermoanaerobacter pseudethanolicus (strain ATCC 33223 / 39E) (Clostridium thermohydrosulfuricum).